The chain runs to 251 residues: tRNA (guanine-N(1)-)-methyltransferase (251 aa).

Residues glycine 113 and 133-138 contribute to the S-adenosyl-L-methionine site; that span reads MGDYVL.

The protein belongs to the RNA methyltransferase TrmD family. Homodimer.

It is found in the cytoplasm. The enzyme catalyses guanosine(37) in tRNA + S-adenosyl-L-methionine = N(1)-methylguanosine(37) in tRNA + S-adenosyl-L-homocysteine + H(+). Specifically methylates guanosine-37 in various tRNAs. This chain is tRNA (guanine-N(1)-)-methyltransferase, found in Sodalis glossinidius (strain morsitans).